The following is a 1356-amino-acid chain: Fibronectin type III domain containing protein 3C1 (1356 aa).

3 disordered regions span residues 303 to 341, 356 to 402, and 428 to 452; these read PRNM…SDNN, TYDE…SDVA, and NQKK…QPGC. Residues 308–341 are compositionally biased toward low complexity; the sequence is DNIPDTNTTDTITSSSAHTPSISTSNATFCSDNN. Residues 370–393 show a composition bias toward polar residues; it reads PSCTSQSASNPSVSENAHNPSSIN. Residues 439–448 are compositionally biased toward basic and acidic residues; sequence LKEHNTEDRT. 4 consecutive Fibronectin type-III domains span residues 454–549, 553–648, 650–741, and 745–842; these read NIEK…TPGC, PPLA…TPPA, LPPK…TRPA, and CPNK…TLPP. Positions 825–838 are enriched in polar residues; that stretch reads GQSRPSDVLTIQTP. The disordered stretch occupies residues 825–894; sequence GQSRPSDVLT…QDRKVHPSSE (70 aa). The segment covering 883–894 has biased composition (basic and acidic residues); sequence PHQDRKVHPSSE. 4 consecutive Fibronectin type-III domains span residues 914-1007, 1017-1103, 1104-1199, and 1202-1299; these read PPSQ…TPGT, EVES…TKPL, PPEP…TKSP, and ALKA…TYKH. The segment at 1299–1320 is disordered; sequence HHSGHGKGSGSKGKGNHNDKGE. A helical membrane pass occupies residues 1330-1350; sequence TFVLTLLIGFALIAVLCAVAV. The Cytoplasmic portion of the chain corresponds to 1351-1356; it reads QYLLIN.

This sequence belongs to the FNDC3 family.

The protein resides in the membrane. The polypeptide is Fibronectin type III domain containing protein 3C1 (Fndc3c1) (Mus musculus (Mouse)).